Consider the following 74-residue polypeptide: MPFKIIASQCTSCSACEPLCPNVAISEKGGNFVIEAAKCSECVGHFDEPQCAAACPVDNTCVVDRALPRYQAPV.

One can recognise a 4Fe-4S ferredoxin-type domain in the interval 2 to 30; it reads PFKIIASQCTSCSACEPLCPNVAISEKGG. [4Fe-4S] cluster contacts are provided by Cys10, Cys13, Cys16, Cys20, Cys39, Cys51, and Cys55.

The cofactor is [4Fe-4S] cluster.

The protein is Ferredoxin-like protein in nif region (frxA) of Bradyrhizobium diazoefficiens (strain JCM 10833 / BCRC 13528 / IAM 13628 / NBRC 14792 / USDA 110).